The chain runs to 1505 residues: Probable serine/threonine-protein kinase DDB_G0280133 (1505 aa).

PAS domains follow at residues 2 to 72, 108 to 178, and 215 to 284; these read NTHN…FETG, RMFI…YHGG, and DMFK…TDSH. Disordered stretches follow at residues 282-348 and 398-533; these read DSHD…FNHS and RVYG…ESSY. Composition is skewed to low complexity over residues 289–314 and 328–344; these read QQQQ…TTST and SSPP…TPTT. Composition is skewed to basic and acidic residues over residues 398-407 and 415-430; these read RVYGKDKDKN and ENKD…ESKE. The segment covering 431–443 has biased composition (basic residues); that stretch reads HRHSKEKKKRKKD. Positions 448 to 468 are enriched in low complexity; it reads NNNNNNNNNNNNNNEQTSDSS. The segment covering 479-489 has biased composition (basic residues); the sequence is SKKKRSSKKKS. Positions 515 to 532 are enriched in low complexity; it reads SSNSSSNSSHSNAPHESS. In terms of domain architecture, Protein kinase spans 542-805; sequence YTLGKTLGRG…IMNVLNHPWL (264 aa). Residues 548-556 and Lys571 each bind ATP; that span reads LGRGNYGVV. Asp684 serves as the catalytic Proton acceptor. The span at 855-960 shows a compositional bias: low complexity; it reads NILNNNNNNN…NNTNSIINNN (106 aa). Disordered regions lie at residues 855–1048, 1072–1091, and 1181–1358; these read NILN…SHQQ, QPNQ…QLQQ, and QQQQ…DEEN. A coiled-coil region spans residues 903 to 939; sequence NNNNNINNNINNNNNVNNNVNNNKNNNNNNNNNSNNN. Positions 961 to 974 are enriched in polar residues; sequence LYNQSLSPQNNNIY. Composition is skewed to low complexity over residues 975–1013 and 1022–1048; these read QHSP…QQQH and QQHQ…SHQQ. The span at 1072 to 1082 shows a compositional bias: polar residues; that stretch reads QPNQQVSFDTN. Positions 1125 to 1189 form a coiled coil; it reads IQQIQQLQQQ…QQQQQQQQND (65 aa). The segment covering 1202-1271 has biased composition (basic and acidic residues); it reads SKRDNSYNKR…NSRDNNRYNN (70 aa). Residues 1272–1282 show a composition bias toward low complexity; it reads RDNNNNNNSNN. Basic and acidic residues-rich tracts occupy residues 1283–1301 and 1313–1326; these read NRER…DYGK and NKDK…KPDF. A compositionally biased stretch (polar residues) spans 1331 to 1347; it reads SLKNDSSSNYGTISSGR. The 65-residue stretch at 1399-1463 folds into the FHA domain; that stretch reads FLFGRNRDIA…NGTFLKGEKI (65 aa).

Belongs to the protein kinase superfamily. CAMK Ser/Thr protein kinase family. SNF1 subfamily.

It carries out the reaction L-seryl-[protein] + ATP = O-phospho-L-seryl-[protein] + ADP + H(+). It catalyses the reaction L-threonyl-[protein] + ATP = O-phospho-L-threonyl-[protein] + ADP + H(+). The polypeptide is Probable serine/threonine-protein kinase DDB_G0280133 (Dictyostelium discoideum (Social amoeba)).